The following is a 471-amino-acid chain: Protoporphyrinogen oxidase (471 aa).

FAD is bound by residues 16 to 21, 39 to 40, Ala47, 61 to 64, Val251, Trp408, and 446 to 448; these read GGGISG, ES, GPNS, and VGL.

Belongs to the protoporphyrinogen/coproporphyrinogen oxidase family. Protoporphyrinogen oxidase subfamily. As to quaternary structure, monomer. Homodimer. It depends on FAD as a cofactor.

The protein resides in the cytoplasm. The protein localises to the cell membrane. The catalysed reaction is protoporphyrinogen IX + 3 O2 = protoporphyrin IX + 3 H2O2. The protein operates within porphyrin-containing compound metabolism; protoporphyrin-IX biosynthesis; protoporphyrin-IX from protoporphyrinogen-IX: step 1/1. With respect to regulation, strongly inhibited by acifluorfen. Its function is as follows. Catalyzes the 6-electron oxidation of protoporphyrinogen-IX to form protoporphyrin-IX. Does not oxidize coproporphyrinogen III. Involved in the classical protoporphyrin-dependent (PPD) heme b biosynthesis. The polypeptide is Protoporphyrinogen oxidase (Myxococcus xanthus).